A 235-amino-acid chain; its full sequence is Ribosomal RNA large subunit methyltransferase E (235 aa).

The S-adenosyl-L-methionine site is built by Gly-76, Trp-78, Asp-99, Asp-115, and Asp-139. Catalysis depends on Lys-179, which acts as the Proton acceptor.

The protein belongs to the class I-like SAM-binding methyltransferase superfamily. RNA methyltransferase RlmE family.

The protein localises to the cytoplasm. The catalysed reaction is uridine(2552) in 23S rRNA + S-adenosyl-L-methionine = 2'-O-methyluridine(2552) in 23S rRNA + S-adenosyl-L-homocysteine + H(+). In terms of biological role, specifically methylates the uridine in position 2552 of 23S rRNA at the 2'-O position of the ribose in the fully assembled 50S ribosomal subunit. In Rhodopseudomonas palustris (strain BisA53), this protein is Ribosomal RNA large subunit methyltransferase E.